The primary structure comprises 92 residues: Transcriptional regulator WhiB1 (92 aa).

The region spanning A12–A74 is the 4Fe-4S Wbl-type domain. The [4Fe-4S] cluster site is built by C13, C41, C44, and C50.

It belongs to the WhiB family. Requires [4Fe-4S] cluster as cofactor. Post-translationally, the Fe-S cluster can be nitrosylated by nitric oxide (NO). In terms of processing, upon Fe-S cluster removal intramolecular disulfide bonds are formed.

The protein resides in the cytoplasm. Functionally, acts as a transcriptional regulator. Probably redox-responsive. The apo- but not holo-form probably binds DNA. The sequence is that of Transcriptional regulator WhiB1 (whiB1) from Bifidobacterium longum (strain NCC 2705).